The following is a 291-amino-acid chain: Transmembrane O-methyltransferase (291 aa).

The chain crosses the membrane as a helical span at residues 31–51 (VGTMSPAIALAFLPLVVTLLV). Residues glutamate 137, 139–140 (GT), serine 145, glutamate 163, and serine 193 contribute to the S-adenosyl-L-methionine site.

It belongs to the class I-like SAM-binding methyltransferase superfamily. Cation-dependent O-methyltransferase family. As to quaternary structure, interacts with LHFPL5, PCDH15, TMC1, TMC2 and TMIE. Interacts directly with TMC1. The interaction of TOMT with TMC1 and TMC2 is required for the transportation of TMC1/2 into the stereocilia of hair cells.

Its subcellular location is the membrane. It is found in the cytoplasm. It localises to the endoplasmic reticulum. The catalysed reaction is a catechol + S-adenosyl-L-methionine = a guaiacol + S-adenosyl-L-homocysteine + H(+). Catalyzes the O-methylation, and thereby the inactivation, of catecholamine neurotransmitters and catechol hormones. Required for auditory function. Component of the cochlear hair cell's mechanotransduction (MET) machinery. Involved in the assembly of the asymmetric tip-link MET complex. Required for transportation of TMC1 and TMC2 proteins into the mechanically sensitive stereocilia of the hair cells. The function in MET is independent of the enzymatic activity. This is Transmembrane O-methyltransferase from Pan troglodytes (Chimpanzee).